The primary structure comprises 300 residues: F-box protein SKIP1 (300 aa).

An F-box; degenerate domain is found at 11–52 (LAPEILINIISRLTIQELWTGPMFVQKSWLTVCRDPYLWSIF).

In terms of assembly, part of a SCF (ASK-cullin-F-box) protein ligase complex. Interacts with SKP1A/ASK1 and SKP1B/ASK2.

The protein resides in the nucleus. The protein operates within protein modification; protein ubiquitination. In terms of biological role, component of SCF(ASK-cullin-F-box) E3 ubiquitin ligase complexes, which may mediate the ubiquitination and subsequent proteasomal degradation of target proteins. The polypeptide is F-box protein SKIP1 (SKIP1) (Arabidopsis thaliana (Mouse-ear cress)).